A 105-amino-acid polypeptide reads, in one-letter code: Small ribosomal subunit protein bS6 (105 aa).

It belongs to the bacterial ribosomal protein bS6 family.

Its function is as follows. Binds together with bS18 to 16S ribosomal RNA. The polypeptide is Small ribosomal subunit protein bS6 (Lawsonia intracellularis (strain PHE/MN1-00)).